Reading from the N-terminus, the 257-residue chain is 5'-nucleotidase SurE (257 aa).

Aspartate 9, aspartate 10, serine 40, and asparagine 93 together coordinate a divalent metal cation.

This sequence belongs to the SurE nucleotidase family. A divalent metal cation is required as a cofactor.

The protein resides in the cytoplasm. It catalyses the reaction a ribonucleoside 5'-phosphate + H2O = a ribonucleoside + phosphate. In terms of biological role, nucleotidase that shows phosphatase activity on nucleoside 5'-monophosphates. The polypeptide is 5'-nucleotidase SurE (Campylobacter hominis (strain ATCC BAA-381 / DSM 21671 / CCUG 45161 / LMG 19568 / NCTC 13146 / CH001A)).